Here is a 181-residue protein sequence, read N- to C-terminus: Large ribosomal subunit protein uL6 (181 aa).

This sequence belongs to the universal ribosomal protein uL6 family. As to quaternary structure, part of the 50S ribosomal subunit.

In terms of biological role, this protein binds to the 23S rRNA, and is important in its secondary structure. It is located near the subunit interface in the base of the L7/L12 stalk, and near the tRNA binding site of the peptidyltransferase center. The polypeptide is Large ribosomal subunit protein uL6 (Synechococcus sp. (strain JA-2-3B'a(2-13)) (Cyanobacteria bacterium Yellowstone B-Prime)).